The following is a 79-amino-acid chain: Large ribosomal subunit protein bL31 (79 aa).

The Zn(2+) site is built by C16, C18, C37, and C40.

This sequence belongs to the bacterial ribosomal protein bL31 family. Type A subfamily. In terms of assembly, part of the 50S ribosomal subunit. Requires Zn(2+) as cofactor.

Functionally, binds the 23S rRNA. The sequence is that of Large ribosomal subunit protein bL31 from Coxiella burnetii (strain CbuG_Q212) (Coxiella burnetii (strain Q212)).